We begin with the raw amino-acid sequence, 601 residues long: Putative helicase 7 (601 aa).

The Helicase ATP-binding domain maps to 17–182; it reads QSFLMSDKNL…IIDAEIIKTD (166 aa). Position 30–37 (30–37) interacts with ATP; the sequence is APTGTGKS. The DEAH box motif lies at 129–132; that stretch reads DEIH. The region spanning 208–375 is the Helicase C-terminal domain; sequence LKEDFIKKMV…VLEDFLLALI (168 aa).

This is Putative helicase 7 (SIFV0007) from Saccharolobus islandicus (Sulfolobus islandicus).